Here is a 97-residue protein sequence, read N- to C-terminus: Aspartyl/glutamyl-tRNA(Asn/Gln) amidotransferase subunit C (97 aa).

This sequence belongs to the GatC family. In terms of assembly, heterotrimer of A, B and C subunits.

It carries out the reaction L-glutamyl-tRNA(Gln) + L-glutamine + ATP + H2O = L-glutaminyl-tRNA(Gln) + L-glutamate + ADP + phosphate + H(+). The catalysed reaction is L-aspartyl-tRNA(Asn) + L-glutamine + ATP + H2O = L-asparaginyl-tRNA(Asn) + L-glutamate + ADP + phosphate + 2 H(+). In terms of biological role, allows the formation of correctly charged Asn-tRNA(Asn) or Gln-tRNA(Gln) through the transamidation of misacylated Asp-tRNA(Asn) or Glu-tRNA(Gln) in organisms which lack either or both of asparaginyl-tRNA or glutaminyl-tRNA synthetases. The reaction takes place in the presence of glutamine and ATP through an activated phospho-Asp-tRNA(Asn) or phospho-Glu-tRNA(Gln). The polypeptide is Aspartyl/glutamyl-tRNA(Asn/Gln) amidotransferase subunit C (Prochlorococcus marinus (strain MIT 9301)).